The following is a 359-amino-acid chain: Alanine racemase, biosynthetic (359 aa).

The Proton acceptor; specific for D-alanine role is filled by lysine 34. An N6-(pyridoxal phosphate)lysine modification is found at lysine 34. A substrate-binding site is contributed by arginine 129. The active-site Proton acceptor; specific for L-alanine is the tyrosine 255. Substrate is bound at residue methionine 303.

This sequence belongs to the alanine racemase family. Pyridoxal 5'-phosphate is required as a cofactor.

The enzyme catalyses L-alanine = D-alanine. Its pathway is amino-acid biosynthesis; D-alanine biosynthesis; D-alanine from L-alanine: step 1/1. It functions in the pathway cell wall biogenesis; peptidoglycan biosynthesis. Functionally, catalyzes the interconversion of L-alanine and D-alanine. Provides the D-alanine required for cell wall biosynthesis. In Escherichia coli O157:H7, this protein is Alanine racemase, biosynthetic (alr).